The chain runs to 169 residues: Methane monooxygenase component A gamma chain (169 aa).

As to quaternary structure, m.trichosporium has two forms of methane monooxygenase, a soluble and a membrane-bound type. The soluble type consists of four components (A to D): protein A, comprising three chains, in an alpha-2, beta-2, gamma-2 configuration, is a nonheme iron protein containing an unusual mu-hydroxo bridge structure at its active site and interacts with both oxygen and methane.

It carries out the reaction methane + NADH + O2 + H(+) = methanol + NAD(+) + H2O. The enzyme catalyses methane + NADPH + O2 + H(+) = methanol + NADP(+) + H2O. In terms of biological role, responsible for the initial oxygenation of methane to methanol in methanotrophs. It also catalyzes the monohydroxylation of a variety of unactivated alkenes, alicyclic, aromatic and heterocyclic compounds. The protein is Methane monooxygenase component A gamma chain (mmoZ) of Methylosinus trichosporium.